The following is a 35-amino-acid chain: Z-limacoditoxin(1)-Dv1 (35 aa).

A signal peptide spans 1–22; the sequence is MKKTFLPIFLVILLASYALANP. Residue Gln23 is modified to Pyrrolidone carboxylic acid. Pro32 bears the Proline amide mark.

This sequence belongs to the limacoditoxin-1 (ACP-like) family. Expressed by the venom secretory cell of the spine. The spine is a cuticular structure containing a single large nucleated venom-secreting cell at its base. It is an independent unit capable of producing, storing and injecting venom. On the back of D.vulnerans caterpillars, spines are grouped together by 50 to 100 to form scoli, of which there are eight in D.vulnerans.

It localises to the secreted. Potently activates insect G protein-coupled receptor. It activates the ACP receptor (ACPR) from the mosquito A.aegypti (EC(50)=0.55 nM) with a potency comparable to that of the endogenous ligand. Has no activity on receptors of the closely related neuropeptides adipokinetic hormone and corazonin. In vivo, does not reveal any observable effects when injected into crickets (A.domesticus). Does not induce increase in intracellular calcium in mouse DRG neurons, suggesting that it does not induce pain. In Doratifera vulnerans (Mottled cup moth), this protein is Z-limacoditoxin(1)-Dv1.